Here is a 351-residue protein sequence, read N- to C-terminus: Tropomodulin-2 (351 aa).

S25 bears the Phosphoserine mark.

This sequence belongs to the tropomodulin family. As to quaternary structure, binds to the N-terminus of tropomyosin and to actin. Binds to TMBr3 as well as to other low molecular mass tropomyosins (TM5a or TM5), but not to high molecular mass tropomyosins (TM2 or TMBr1). Neuronal-tissue specific.

It localises to the cytoplasm. The protein localises to the cytoskeleton. Its function is as follows. Blocks the elongation and depolymerization of the actin filaments at the pointed end. The Tmod/TM complex contributes to the formation of the short actin protofilament, which in turn defines the geometry of the membrane skeleton. This chain is Tropomodulin-2 (Tmod2), found in Rattus norvegicus (Rat).